We begin with the raw amino-acid sequence, 345 residues long: Anthranilate phosphoribosyltransferase (345 aa).

Residues glycine 79, 82 to 83, threonine 87, 89 to 92, 106 to 114, and serine 118 each bind 5-phospho-alpha-D-ribose 1-diphosphate; these read GD, NVST, and KHGNRAVSG. Position 79 (glycine 79) interacts with anthranilate. Mg(2+) is bound at residue serine 91. Residue asparagine 109 coordinates anthranilate. Arginine 164 lines the anthranilate pocket. Mg(2+) contacts are provided by aspartate 223 and glutamate 224.

The protein belongs to the anthranilate phosphoribosyltransferase family. In terms of assembly, homodimer. It depends on Mg(2+) as a cofactor.

It catalyses the reaction N-(5-phospho-beta-D-ribosyl)anthranilate + diphosphate = 5-phospho-alpha-D-ribose 1-diphosphate + anthranilate. The protein operates within amino-acid biosynthesis; L-tryptophan biosynthesis; L-tryptophan from chorismate: step 2/5. Functionally, catalyzes the transfer of the phosphoribosyl group of 5-phosphorylribose-1-pyrophosphate (PRPP) to anthranilate to yield N-(5'-phosphoribosyl)-anthranilate (PRA). The chain is Anthranilate phosphoribosyltransferase from Saccharolobus islandicus (strain M.14.25 / Kamchatka #1) (Sulfolobus islandicus).